Here is a 113-residue protein sequence, read N- to C-terminus: MHEMSLAMAAIDLAAEQATQRGFTKVTALWLEVGSFSCVDPDTIAFCFEAAAKGTAVEGAQLHFQHQAAEAWCYDCNKTVTLTERGQACPECGGYKLRVAQGDSLRITDIEVS.

Ni(2+) is bound at residue H2. Positions 73, 76, 89, and 92 each coordinate Zn(2+).

Belongs to the HypA/HybF family.

Involved in the maturation of [NiFe] hydrogenases. Required for nickel insertion into the metal center of the hydrogenase. This is Hydrogenase maturation factor HypA from Aeromonas hydrophila subsp. hydrophila (strain ATCC 7966 / DSM 30187 / BCRC 13018 / CCUG 14551 / JCM 1027 / KCTC 2358 / NCIMB 9240 / NCTC 8049).